A 292-amino-acid polypeptide reads, in one-letter code: Undecaprenyl-diphosphatase (292 aa).

7 consecutive transmembrane segments (helical) span residues 1–21 (MSLV…FLPV), 46–66 (FVTI…RADI), 90–110 (LGWY…LLEH), 114–134 (ALGN…LLAA), 192–212 (FLLS…STVP), 225–245 (VVGT…LLAW), and 253–273 (VFVV…LSGV).

This sequence belongs to the UppP family.

The protein resides in the cell inner membrane. It catalyses the reaction di-trans,octa-cis-undecaprenyl diphosphate + H2O = di-trans,octa-cis-undecaprenyl phosphate + phosphate + H(+). In terms of biological role, catalyzes the dephosphorylation of undecaprenyl diphosphate (UPP). Confers resistance to bacitracin. The chain is Undecaprenyl-diphosphatase from Anaeromyxobacter sp. (strain K).